Consider the following 343-residue polypeptide: S-adenosylmethionine:tRNA ribosyltransferase-isomerase (343 aa).

This sequence belongs to the QueA family. Monomer.

Its subcellular location is the cytoplasm. It catalyses the reaction 7-aminomethyl-7-carbaguanosine(34) in tRNA + S-adenosyl-L-methionine = epoxyqueuosine(34) in tRNA + adenine + L-methionine + 2 H(+). Its pathway is tRNA modification; tRNA-queuosine biosynthesis. Its function is as follows. Transfers and isomerizes the ribose moiety from AdoMet to the 7-aminomethyl group of 7-deazaguanine (preQ1-tRNA) to give epoxyqueuosine (oQ-tRNA). In Coxiella burnetii (strain Dugway 5J108-111), this protein is S-adenosylmethionine:tRNA ribosyltransferase-isomerase.